The chain runs to 336 residues: Mediator of RNA polymerase II transcription subunit 4 (336 aa).

Disordered stretches follow at residues M1 to V45 and N59 to A85. Residues Q154–Q192 are a coiled coil. Residues P281–D336 are disordered. Acidic residues predominate over residues I325–D336.

It belongs to the Mediator complex subunit 4 family. Component of the Mediator complex.

The protein resides in the nucleus. Its function is as follows. Component of the Mediator complex, a coactivator involved in the regulated transcription of nearly all RNA polymerase II-dependent genes. Mediator functions as a bridge to convey information from gene-specific regulatory proteins to the basal RNA polymerase II transcription machinery. Mediator is recruited to promoters by direct interactions with regulatory proteins and serves as a scaffold for the assembly of a functional preinitiation complex with RNA polymerase II and the general transcription factors. In Yarrowia lipolytica (strain CLIB 122 / E 150) (Yeast), this protein is Mediator of RNA polymerase II transcription subunit 4 (MED4).